We begin with the raw amino-acid sequence, 102 residues long: NADH-quinone oxidoreductase subunit K (102 aa).

Transmembrane regions (helical) follow at residues 5 to 25 (IAHY…GIFL), 31 to 51 (IIIL…FVAF), and 66 to 86 (FILT…VVFF).

The protein belongs to the complex I subunit 4L family. In terms of assembly, NDH-1 is composed of 14 different subunits. Subunits NuoA, H, J, K, L, M, N constitute the membrane sector of the complex.

Its subcellular location is the cell inner membrane. It carries out the reaction a quinone + NADH + 5 H(+)(in) = a quinol + NAD(+) + 4 H(+)(out). In terms of biological role, NDH-1 shuttles electrons from NADH, via FMN and iron-sulfur (Fe-S) centers, to quinones in the respiratory chain. The immediate electron acceptor for the enzyme in this species is believed to be ubiquinone. Couples the redox reaction to proton translocation (for every two electrons transferred, four hydrogen ions are translocated across the cytoplasmic membrane), and thus conserves the redox energy in a proton gradient. In Bartonella bacilliformis (strain ATCC 35685 / KC583 / Herrer 020/F12,63), this protein is NADH-quinone oxidoreductase subunit K.